The chain runs to 262 residues: 3-methyl-2-oxobutanoate hydroxymethyltransferase (262 aa).

2 residues coordinate Mg(2+): aspartate 42 and aspartate 81. Residues 42 to 43 (DS), aspartate 81, and lysine 110 each bind 3-methyl-2-oxobutanoate. Residue glutamate 112 coordinates Mg(2+). Catalysis depends on glutamate 180, which acts as the Proton acceptor.

The protein belongs to the PanB family. In terms of assembly, homodecamer; pentamer of dimers. Requires Mg(2+) as cofactor.

The protein localises to the cytoplasm. It carries out the reaction 3-methyl-2-oxobutanoate + (6R)-5,10-methylene-5,6,7,8-tetrahydrofolate + H2O = 2-dehydropantoate + (6S)-5,6,7,8-tetrahydrofolate. It functions in the pathway cofactor biosynthesis; (R)-pantothenate biosynthesis; (R)-pantoate from 3-methyl-2-oxobutanoate: step 1/2. Catalyzes the reversible reaction in which hydroxymethyl group from 5,10-methylenetetrahydrofolate is transferred onto alpha-ketoisovalerate to form ketopantoate. In Legionella pneumophila (strain Lens), this protein is 3-methyl-2-oxobutanoate hydroxymethyltransferase.